A 668-amino-acid chain; its full sequence is Phosphoglycerate transport system sensor protein PgtB (668 aa).

Transmembrane regions (helical) follow at residues 20-40 and 342-362; these read GAFL…LYSW and LILV…HYFI. The 53-residue stretch at 364–416 folds into the HAMP domain; that stretch reads SRLVKRFTALNQAVVQIGLGRTDSTIPVYGRDELGRIARLLRHTLGQLNMQRR. One can recognise a Histidine kinase domain in the interval 454–663; that stretch reads TLAHEINQPL…CVVLQFSVTD (210 aa). His457 bears the Phosphohistidine; by autocatalysis mark.

The protein localises to the cell inner membrane. The enzyme catalyses ATP + protein L-histidine = ADP + protein N-phospho-L-histidine.. In terms of biological role, member of the two-component regulatory system PgtB/PgtA that regulates the inducible phosphoglycerate transport system. Activates PgtA by phosphorylation. In Salmonella typhimurium (strain LT2 / SGSC1412 / ATCC 700720), this protein is Phosphoglycerate transport system sensor protein PgtB (pgtB).